The primary structure comprises 194 residues: Small COPII coat GTPase SAR1B (194 aa).

Residues 2 to 4 (FLV) carry the STAR; SAR1-N-terminal activation recruitment. Required for the activation and subsequent recruitment to ER membrane motif. The mediates recruitment to ER membranes stretch occupies residues 10–14 (MFLWL). Residues Asn30, Ala31, Gly32, Lys33, Thr34, and Thr35 each contribute to the GDP site. GTP is bound at residue Asn30. 4 residues coordinate GTP: Gly32, Lys33, Thr34, and Thr35. Asp70 lines the Mg(2+) pocket. GDP contacts are provided by Lys131, Asp133, and Ile172. Lys131, Asp133, and Ile172 together coordinate GTP.

Belongs to the small GTPase superfamily. SAR1 family. As to quaternary structure, homodimer; upon association with membrane. Part of the coat protein complex II/COPII, composed of SEC23/24 and SEC13/31 heterodimers, that it helps recruit and assemble on endoplasmic reticulum (ER) membranes at ER exit sites.

The protein resides in the endoplasmic reticulum membrane. The protein localises to the golgi apparatus. It is found in the golgi stack membrane. It localises to the cytoplasm. Its subcellular location is the cytosol. The catalysed reaction is GTP + H2O = GDP + phosphate + H(+). Small GTPases activation is mediated by guanine exchange factors (GEF), while inactivation through hydrolysis of the bound GTP is stimulated by GTPase activating proteins (GAP). Its function is as follows. Small GTPase that cycles between an active GTP-bound and an inactive GDP-bound state and mainly functions in vesicle-mediated endoplasmic reticulum (ER) to Golgi transport. The active GTP-bound form inserts into the endoplasmic reticulum membrane where it recruits the remainder of the coat protein complex II/COPII. The coat protein complex II assembling and polymerizing on endoplasmic reticulum membrane is responsible for both the sorting of cargos and the deformation and budding of membranes into vesicles destined to the Golgi. This Dictyostelium discoideum (Social amoeba) protein is Small COPII coat GTPase SAR1B (sarB).